The sequence spans 173 residues: Probable WRKY transcription factor 50 (173 aa).

The WRKY DNA-binding region spans 107-172 (SEVEVLDDGF…YEGSHNHSSM (66 aa)).

This sequence belongs to the WRKY group II-c family.

It localises to the nucleus. Functionally, transcription factor. Interacts specifically with the W box (5'-(T)TGAC[CT]-3'), a frequently occurring elicitor-responsive cis-acting element. This Arabidopsis thaliana (Mouse-ear cress) protein is Probable WRKY transcription factor 50 (WRKY50).